A 327-amino-acid polypeptide reads, in one-letter code: Petrobactin synthase (327 aa).

The catalysed reaction is N(8)-citryl-spermidine + 3,4-dihydroxybenzoyl-[aryl-carrier protein] = N(1)-(3,4-dihydroxybenzoyl)-N(8)-citryl-spermidine + holo-[aryl-carrier protein] + H(+). It carries out the reaction N(8),N'(8)-citryl-bis(spermidine) + 3,4-dihydroxybenzoyl-[aryl-carrier protein] = N(1)-(3,4-dihydroxybenzoyl)-N(8),N'(8)-citryl-bis(spermidine) + holo-[aryl-carrier protein] + H(+). The enzyme catalyses N(1)-(3,4-dihydroxybenzoyl)-N(8),N'(8)-citryl-bis(spermidine) + 3,4-dihydroxybenzoyl-[aryl-carrier protein] = petrobactin + holo-[aryl-carrier protein] + H(+). Its pathway is siderophore biosynthesis; petrobactin biosynthesis. Involved in the biosynthesis of petrobactin, a catecholate siderophore that functions in both iron acquisition and virulence. Transfers the activated 3,4-dihydroxybenzoate (3,4-DHBA) moiety from 3,4-DHBA-loaded AsbD to different receipient molecules, including N-citryl-spermidine, N8,N'8-citryl-bis(spermidine) and N1-(3,4-dihydroxybenzoyl)-N8,N'8-citryl-bis(spermidine). Also catalyzes the transfer of the activated 3,4-DHBA moiety from 3,4-DHBA-loaded AsbD to spermidine to generate DHB-spermidine (DHB-SP). The polypeptide is Petrobactin synthase (Bacillus anthracis).